A 614-amino-acid polypeptide reads, in one-letter code: Membrane protein insertase YidC (614 aa).

Residues 6–26 (IVLLIIFSTSLLFLWDAWIKE) traverse the membrane as a helical segment. Composition is skewed to polar residues over residues 34-48 (PAIT…STQS) and 60-70 (ELTSSQASPDT). Residues 34–87 (PAITQADSSAGSTQSRNDDSLPVPGSELTSSQASPDTNGIPASGGNGDSVTPRL) form a disordered region. Helical transmembrane passes span 380 to 400 (WGVA…PLSA), 450 to 470 (FPIL…LAAV), 484 to 504 (LSSP…MFVQ), and 524 to 544 (PVAF…YSLV). Residues 562–614 (TAPSKDTPEPPVSKQVNSSENPETTANSPADSPKQPQTPANNPRKMYKRTRKK) are disordered. Polar residues predominate over residues 575 to 602 (KQVNSSENPETTANSPADSPKQPQTPAN).

The protein belongs to the OXA1/ALB3/YidC family. Type 1 subfamily. Interacts with the Sec translocase complex via SecD. Specifically interacts with transmembrane segments of nascent integral membrane proteins during membrane integration.

It localises to the cell inner membrane. Required for the insertion and/or proper folding and/or complex formation of integral membrane proteins into the membrane. Involved in integration of membrane proteins that insert both dependently and independently of the Sec translocase complex, as well as at least some lipoproteins. Aids folding of multispanning membrane proteins. The chain is Membrane protein insertase YidC from Nitrosomonas europaea (strain ATCC 19718 / CIP 103999 / KCTC 2705 / NBRC 14298).